Consider the following 1439-residue polypeptide: Gag-Pol polyprotein (1439 aa).

Gly2 carries N-myristoyl glycine; by host lipidation. The segment at 7-31 (VLSGGELDRWEKIRLRPGGKKKYRL) is interaction with Gp41. An interaction with host CALM1 region spans residues 8–43 (LSGGELDRWEKIRLRPGGKKKYRLKHIVWASRELER). The interaction with host AP3D1 stretch occupies residues 12 to 19 (ELDRWEKI). Residues 14 to 33 (DRWEKIRLRPGGKKKYRLKH) are interaction with membrane phosphatidylinositol 4,5-bisphosphate and RNA. A Nuclear export signal motif is present at residues 16–22 (WEKIRLR). The Nuclear localization signal motif lies at 26–32 (KKKYRLK). Positions 73-77 (EELTS) are interaction with membrane phosphatidylinositol 4,5-bisphosphate. The interval 106–128 (EEQTKSMKKAQQAAADTGNSSQV) is disordered. Tyr132 bears the Phosphotyrosine; by host mark. Residues 189–227 (NTVGGHQAAMQMLKETINEEAAEWDRLHPVHAGPIAPGQ) form an interaction with human PPIA/CYPA and NUP153 region. The segment at 277-363 (YSPVSILDIR…GGPGHKARVL (87 aa)) is dimerization/Multimerization of capsid protein p24. 2 CCHC-type zinc fingers span residues 390–407 (VKCF…NCRA) and 411–428 (KGCW…ECTE). Residues 493-497 (PQITL) form a dimerization of protease region. Residues 512-581 (KEALLDTGAD…TPVNIIGRNL (70 aa)) enclose the Peptidase A2 domain. Asp517 serves as the catalytic For protease activity; shared with dimeric partner. Dimerization of protease stretches follow at residues 541–547 (GIGGFIK) and 580–592 (NLLT…LNFP). Residues 635 to 825 (EGKISKIGPE…PPFLWMGYEL (191 aa)) form the Reverse transcriptase domain. Positions 701, 776, and 777 each coordinate Mg(2+). An RT 'primer grip' region spans residues 818–826 (FLWMGYELH). The short motif at 989–1005 (WETWWTEYWQATWIPEW) is the Tryptophan repeat motif element. The 124-residue stretch at 1025–1148 (IVGAETFYVD…VDKLVSAGIR (124 aa)) folds into the RNase H type-1 domain. Mg(2+) contacts are provided by Asp1034, Glu1069, Asp1089, and Asp1140. Residues 1154 to 1195 (DGIDKAQEDHEKYHSNWRAMASDFNLPPIVAKEIVASCDKCQ) form an Integrase-type zinc finger. Residues His1163, His1167, Cys1191, and Cys1194 each coordinate Zn(2+). Residues 1205 to 1355 (VDCSPGIWQL…SAGERIIDII (151 aa)) enclose the Integrase catalytic domain. Residues Asp1215, Asp1267, and Glu1303 each contribute to the Mg(2+) site. The segment at residues 1374 to 1421 (FRVYYRDNRDPIWKGPAKLLWKGEGAVVIQDNSDIKVVPRRKVKIIRD) is a DNA-binding region (integrase-type).

Homotrimer; further assembles as hexamers of trimers. Interacts with gp41 (via C-terminus). Interacts with host CALM1; this interaction induces a conformational change in the Matrix protein, triggering exposure of the myristate group. Interacts with host AP3D1; this interaction allows the polyprotein trafficking to multivesicular bodies during virus assembly. Part of the pre-integration complex (PIC) which is composed of viral genome, matrix protein, Vpr and integrase. As to quaternary structure, homodimer; the homodimer further multimerizes as homohexamers or homopentamers. Interacts with human PPIA/CYPA; This interaction stabilizes the capsid. Interacts with human NUP153. Interacts with host PDZD8; this interaction stabilizes the capsid. Interacts with monkey TRIM5; this interaction destabilizes the capsid. In terms of assembly, homodimer, whose active site consists of two apposed aspartic acid residues. Heterodimer of p66 RT and p51 RT (RT p66/p51). Heterodimerization of RT is essential for DNA polymerase activity. The overall folding of the subdomains is similar in p66 RT and p51 RT but the spatial arrangements of the subdomains are dramatically different. As to quaternary structure, homotetramer; may further associate as a homohexadecamer. Part of the pre-integration complex (PIC) which is composed of viral genome, matrix protein, Vpr and integrase. Interacts with human SMARCB1/INI1 and human PSIP1/LEDGF isoform 1. Interacts with human KPNA3; this interaction might play a role in nuclear import of the pre-integration complex. Interacts with human NUP153; this interaction might play a role in nuclear import of the pre-integration complex. It depends on Mg(2+) as a cofactor. Post-translationally, specific enzymatic cleavages by the viral protease yield mature proteins. The protease is released by autocatalytic cleavage. The polyprotein is cleaved during and after budding, this process is termed maturation. Proteolytic cleavage of p66 RT removes the RNase H domain to yield the p51 RT subunit. Nucleocapsid protein p7 might be further cleaved after virus entry. In terms of processing, tyrosine phosphorylated presumably in the virion by a host kinase. Phosphorylation is apparently not a major regulator of membrane association. Phosphorylated possibly by host MAPK1; this phosphorylation is necessary for Pin1-mediated virion uncoating. Post-translationally, methylated by host PRMT6, impairing its function by reducing RNA annealing and the initiation of reverse transcription.

The protein localises to the host cell membrane. Its subcellular location is the host endosome. It localises to the host multivesicular body. It is found in the virion membrane. The protein resides in the host nucleus. The protein localises to the host cytoplasm. Its subcellular location is the virion. It carries out the reaction Specific for a P1 residue that is hydrophobic, and P1' variable, but often Pro.. The catalysed reaction is Endohydrolysis of RNA in RNA/DNA hybrids. Three different cleavage modes: 1. sequence-specific internal cleavage of RNA. Human immunodeficiency virus type 1 and Moloney murine leukemia virus enzymes prefer to cleave the RNA strand one nucleotide away from the RNA-DNA junction. 2. RNA 5'-end directed cleavage 13-19 nucleotides from the RNA end. 3. DNA 3'-end directed cleavage 15-20 nucleotides away from the primer terminus.. It catalyses the reaction 3'-end directed exonucleolytic cleavage of viral RNA-DNA hybrid.. The enzyme catalyses DNA(n) + a 2'-deoxyribonucleoside 5'-triphosphate = DNA(n+1) + diphosphate. With respect to regulation, protease: The viral protease is inhibited by many synthetic protease inhibitors (PIs), such as amprenavir, atazanavir, indinavir, loprinavir, nelfinavir, ritonavir and saquinavir. Use of protease inhibitors in tritherapy regimens permit more ambitious therapeutic strategies. Reverse transcriptase/ribonuclease H: RT can be inhibited either by nucleoside RT inhibitors (NRTIs) or by non nucleoside RT inhibitors (NNRTIs). NRTIs act as chain terminators, whereas NNRTIs inhibit DNA polymerization by binding a small hydrophobic pocket near the RT active site and inducing an allosteric change in this region. Classical NRTIs are abacavir, adefovir (PMEA), didanosine (ddI), lamivudine (3TC), stavudine (d4T), tenofovir (PMPA), zalcitabine (ddC), and zidovudine (AZT). Classical NNRTIs are atevirdine (BHAP U-87201E), delavirdine, efavirenz (DMP-266), emivirine (I-EBU), and nevirapine (BI-RG-587). The tritherapies used as a basic effective treatment of AIDS associate two NRTIs and one NNRTI. Functionally, mediates, with Gag polyprotein, the essential events in virion assembly, including binding the plasma membrane, making the protein-protein interactions necessary to create spherical particles, recruiting the viral Env proteins, and packaging the genomic RNA via direct interactions with the RNA packaging sequence (Psi). Gag-Pol polyprotein may regulate its own translation, by the binding genomic RNA in the 5'-UTR. At low concentration, the polyprotein would promote translation, whereas at high concentration, the polyprotein would encapsidate genomic RNA and then shut off translation. In terms of biological role, targets the polyprotein to the plasma membrane via a multipartite membrane-binding signal, that includes its myristoylated N-terminus. Matrix protein is part of the pre-integration complex. Implicated in the release from host cell mediated by Vpu. Binds to RNA. Its function is as follows. Forms the conical core that encapsulates the genomic RNA-nucleocapsid complex in the virion. Most core are conical, with only 7% tubular. The core is constituted by capsid protein hexamer subunits. The core is disassembled soon after virion entry. Host restriction factors such as TRIM5-alpha or TRIMCyp bind retroviral capsids and cause premature capsid disassembly, leading to blocks in reverse transcription. Capsid restriction by TRIM5 is one of the factors which restricts HIV-1 to the human species. Host PIN1 apparently facilitates the virion uncoating. On the other hand, interactions with PDZD8 or CYPA stabilize the capsid. Encapsulates and protects viral dimeric unspliced genomic RNA (gRNA). Binds these RNAs through its zinc fingers. Acts as a nucleic acid chaperone which is involved in rearangement of nucleic acid secondary structure during gRNA retrotranscription. Also facilitates template switch leading to recombination. As part of the polyprotein, participates in gRNA dimerization, packaging, tRNA incorporation and virion assembly. Functionally, aspartyl protease that mediates proteolytic cleavages of Gag and Gag-Pol polyproteins during or shortly after the release of the virion from the plasma membrane. Cleavages take place as an ordered, step-wise cascade to yield mature proteins. This process is called maturation. Displays maximal activity during the budding process just prior to particle release from the cell. Also cleaves Nef and Vif, probably concomitantly with viral structural proteins on maturation of virus particles. Hydrolyzes host EIF4GI and PABP1 in order to shut off the capped cellular mRNA translation. The resulting inhibition of cellular protein synthesis serves to ensure maximal viral gene expression and to evade host immune response. Also mediates cleavage of host YTHDF3. Mediates cleavage of host CARD8, thereby activating the CARD8 inflammasome, leading to the clearance of latent HIV-1 in patient CD4(+) T-cells after viral reactivation; in contrast, HIV-1 can evade CARD8-sensing when its protease remains inactive in infected cells prior to viral budding. In terms of biological role, multifunctional enzyme that converts the viral RNA genome into dsDNA in the cytoplasm, shortly after virus entry into the cell. This enzyme displays a DNA polymerase activity that can copy either DNA or RNA templates, and a ribonuclease H (RNase H) activity that cleaves the RNA strand of RNA-DNA heteroduplexes in a partially processive 3' to 5' endonucleasic mode. Conversion of viral genomic RNA into dsDNA requires many steps. A tRNA(3)-Lys binds to the primer-binding site (PBS) situated at the 5'-end of the viral RNA. RT uses the 3' end of the tRNA primer to perform a short round of RNA-dependent minus-strand DNA synthesis. The reading proceeds through the U5 region and ends after the repeated (R) region which is present at both ends of viral RNA. The portion of the RNA-DNA heteroduplex is digested by the RNase H, resulting in a ssDNA product attached to the tRNA primer. This ssDNA/tRNA hybridizes with the identical R region situated at the 3' end of viral RNA. This template exchange, known as minus-strand DNA strong stop transfer, can be either intra- or intermolecular. RT uses the 3' end of this newly synthesized short ssDNA to perform the RNA-dependent minus-strand DNA synthesis of the whole template. RNase H digests the RNA template except for two polypurine tracts (PPTs) situated at the 5'-end and near the center of the genome. It is not clear if both polymerase and RNase H activities are simultaneous. RNase H probably can proceed both in a polymerase-dependent (RNA cut into small fragments by the same RT performing DNA synthesis) and a polymerase-independent mode (cleavage of remaining RNA fragments by free RTs). Secondly, RT performs DNA-directed plus-strand DNA synthesis using the PPTs that have not been removed by RNase H as primers. PPTs and tRNA primers are then removed by RNase H. The 3' and 5' ssDNA PBS regions hybridize to form a circular dsDNA intermediate. Strand displacement synthesis by RT to the PBS and PPT ends produces a blunt ended, linear dsDNA copy of the viral genome that includes long terminal repeats (LTRs) at both ends. Its function is as follows. Catalyzes viral DNA integration into the host chromosome, by performing a series of DNA cutting and joining reactions. This enzyme activity takes place after virion entry into a cell and reverse transcription of the RNA genome in dsDNA. The first step in the integration process is 3' processing. This step requires a complex comprising the viral genome, matrix protein, Vpr and integrase. This complex is called the pre-integration complex (PIC). The integrase protein removes 2 nucleotides from each 3' end of the viral DNA, leaving recessed CA OH's at the 3' ends. In the second step, the PIC enters cell nucleus. This process is mediated through integrase and Vpr proteins, and allows the virus to infect a non dividing cell. This ability to enter the nucleus is specific of lentiviruses, other retroviruses cannot and rely on cell division to access cell chromosomes. In the third step, termed strand transfer, the integrase protein joins the previously processed 3' ends to the 5' ends of strands of target cellular DNA at the site of integration. The 5'-ends are produced by integrase-catalyzed staggered cuts, 5 bp apart. A Y-shaped, gapped, recombination intermediate results, with the 5'-ends of the viral DNA strands and the 3' ends of target DNA strands remaining unjoined, flanking a gap of 5 bp. The last step is viral DNA integration into host chromosome. This involves host DNA repair synthesis in which the 5 bp gaps between the unjoined strands are filled in and then ligated. Since this process occurs at both cuts flanking the HIV genome, a 5 bp duplication of host DNA is produced at the ends of HIV-1 integration. Alternatively, Integrase may catalyze the excision of viral DNA just after strand transfer, this is termed disintegration. The polypeptide is Gag-Pol polyprotein (gag-pol) (Human immunodeficiency virus type 1 group M subtype B (isolate JRCSF) (HIV-1)).